Consider the following 326-residue polypeptide: Cytosolic sulfotransferase 12 (326 aa).

75 to 80 (KSGTTW) serves as a coordination point for 3'-phosphoadenylyl sulfate. The active-site Proton acceptor is the His140. 3'-phosphoadenylyl sulfate-binding positions include Arg162, Ser170, Tyr228, and 290–292 (RKG).

The protein belongs to the sulfotransferase 1 family. As to quaternary structure, dimer. As to expression, expressed in the aerial parts of seedlings, in roots, leaves and flowers. Not detected in stems and siliques.

It localises to the cytoplasm. Functionally, sulfotransferase that utilizes 3'-phospho-5'-adenylyl sulfate (PAPS) as sulfonate donor to catalyze the stereospecific sulfate conjugation of 24-epibrassinosteroids. Preferred substrates are 24-epicathasterone and 6-deoxo-24-epicathasterone. Low activity with 22-deoxy-24-epiteasterone. No activity with 24-epimers catasterone and brassinolide. Sulfonates salicylic acid. May be involved in detoxification. Enhances plant response to pathogen infection and contributes to long distance signaling in systemic acquired resistance (SAR). The protein is Cytosolic sulfotransferase 12 (SOT12) of Arabidopsis thaliana (Mouse-ear cress).